The chain runs to 490 residues: 5-hydroxytryptamine receptor 3A (490 aa).

An N-terminal signal peptide occupies residues 1-19 (MVLWLQLALLALLLPTSLA). Over 20–249 (QGEVRGKGTA…FYVVIRRRPL (230 aa)) the chain is Extracellular. 4 N-linked (GlcNAc...) asparagine glycosylation sites follow: Asn33, Asn109, Asn175, and Asn191. Cys162 and Cys176 form a disulfide bridge. The helical transmembrane segment at 250–270 (FYAVTLLLPSIFLMIVDIVGF) threads the bilayer. Residues 271-285 (YLPPDSGERVSFKIT) lie on the Cytoplasmic side of the membrane. Residues 286-306 (LLLGYSVFLIIVSDTLPATAI) traverse the membrane as a helical segment. Residues 307 to 312 (GTPLIS) are Extracellular-facing. The chain crosses the membrane as a helical span at residues 313–333 (VYFVVCMALLVISLAETILIV). At 334–467 (RLVHKQDLQQ…GSVLDKLLFR (134 aa)) the chain is on the cytoplasmic side. The interval 401–422 (GGPQDLEKTSRGRGSPPPPPRE) is disordered. The tract at residues 426-462 (AMCGLLQELASIRHFLEKREETREVARDWLRVGSVLD) is HA-stretch; determines single-channel conductance in 5-HT3 receptors. The chain crosses the membrane as a helical span at residues 468-488 (VYLLAVLAYSITLVTLWSVWH). Residues 489–490 (YA) lie on the Extracellular side of the membrane.

It belongs to the ligand-gated ion channel (TC 1.A.9) family. 5-hydroxytryptamine receptor (TC 1.A.9.2) subfamily. HTR3A sub-subfamily. Forms homopentameric as well as heteropentameric serotonin-activated cation-selective channel complexes with HTR3B or HTR3C or HTR3D or HTR3E. The homomeric complex is functional but exhibits low conductance with modified voltage dependence, and decreased agonist and antagonist affinity. Heteropentameric complexes display properties which resemble that of neuronal serotonin-activated channels in vivo. Interacts with RIC3. In terms of tissue distribution, expressed in cortex, intestine and liver. Not expressed in muscle or spleen.

The protein resides in the postsynaptic cell membrane. The protein localises to the cell membrane. The enzyme catalyses Na(+)(in) = Na(+)(out). It carries out the reaction K(+)(in) = K(+)(out). The catalysed reaction is Ca(2+)(in) = Ca(2+)(out). It catalyses the reaction Mg(2+)(in) = Mg(2+)(out). Its function is as follows. Forms serotonin (5-hydroxytryptamine/5-HT3)-activated cation-selective channel complexes, which when activated cause fast, depolarizing responses in neurons. This is 5-hydroxytryptamine receptor 3A from Cavia porcellus (Guinea pig).